The chain runs to 256 residues: MKFIVIKIGGSTLSDMHPSIINNIKHLRSNNIYPIIVHGGGPFINEALSNQQIEPHFVNGLRVTDKATMTITKHTLIADVNTALVAQFNQQQCSAIGLCGLDAQLFEIKRFDQQYGYVGVPTTLNIDSLSYLCTKFVPIINSIGFNNHDGEFYNINADTLAYFIAASLEAPIYVLSNIAGVLINDVVIPQLPLADINQYIEHGDIYGGMIPKVLDAKNAIKNGCPKVIIASGNKPNIIEAIYNNDFVGTTILKSSV.

Substrate contacts are provided by residues 40–41 (GG), Arg-62, and Asn-154.

Belongs to the acetylglutamate kinase family. ArgB subfamily.

Its subcellular location is the cytoplasm. The catalysed reaction is N-acetyl-L-glutamate + ATP = N-acetyl-L-glutamyl 5-phosphate + ADP. Its pathway is amino-acid biosynthesis; L-arginine biosynthesis; N(2)-acetyl-L-ornithine from L-glutamate: step 2/4. Its function is as follows. Catalyzes the ATP-dependent phosphorylation of N-acetyl-L-glutamate. This chain is Acetylglutamate kinase, found in Staphylococcus aureus (strain MRSA252).